The chain runs to 900 residues: Bifunctional uridylyltransferase/uridylyl-removing enzyme (900 aa).

The segment at 1 to 342 (MPQVDPELFD…PCEQPVQIQP (342 aa)) is uridylyltransferase. The uridylyl-removing stretch occupies residues 343–705 (LNSRFQLRDG…TTQREFESGS (363 aa)). The HD domain maps to 461-583 (VDAHTLNLIK…VGDQTHLDYL (123 aa)). ACT domains lie at 706–789 (QIFI…IIQR) and 816–891 (VLEV…DNGR).

The protein belongs to the GlnD family. Mg(2+) serves as cofactor.

It catalyses the reaction [protein-PII]-L-tyrosine + UTP = [protein-PII]-uridylyl-L-tyrosine + diphosphate. The catalysed reaction is [protein-PII]-uridylyl-L-tyrosine + H2O = [protein-PII]-L-tyrosine + UMP + H(+). With respect to regulation, uridylyltransferase (UTase) activity is inhibited by glutamine, while glutamine activates uridylyl-removing (UR) activity. Modifies, by uridylylation and deuridylylation, the PII regulatory proteins (GlnB and homologs), in response to the nitrogen status of the cell that GlnD senses through the glutamine level. Under low glutamine levels, catalyzes the conversion of the PII proteins and UTP to PII-UMP and PPi, while under higher glutamine levels, GlnD hydrolyzes PII-UMP to PII and UMP (deuridylylation). Thus, controls uridylylation state and activity of the PII proteins, and plays an important role in the regulation of nitrogen assimilation and metabolism. The chain is Bifunctional uridylyltransferase/uridylyl-removing enzyme from Pseudomonas aeruginosa (strain UCBPP-PA14).